Here is a 662-residue protein sequence, read N- to C-terminus: DNA ligase (662 aa).

NAD(+) contacts are provided by residues 34 to 38 (DYDYD), 83 to 84 (SI), and E113. K115 functions as the N6-AMP-lysine intermediate in the catalytic mechanism. Positions 136, 172, 286, and 310 each coordinate NAD(+). 4 residues coordinate Zn(2+): C404, C407, C422, and C427. Residues 583–662 (RASASCQGKT…SDLLKILYPN (80 aa)) enclose the BRCT domain.

The protein belongs to the NAD-dependent DNA ligase family. LigA subfamily. Mg(2+) is required as a cofactor. The cofactor is Mn(2+).

The catalysed reaction is NAD(+) + (deoxyribonucleotide)n-3'-hydroxyl + 5'-phospho-(deoxyribonucleotide)m = (deoxyribonucleotide)n+m + AMP + beta-nicotinamide D-nucleotide.. Its function is as follows. DNA ligase that catalyzes the formation of phosphodiester linkages between 5'-phosphoryl and 3'-hydroxyl groups in double-stranded DNA using NAD as a coenzyme and as the energy source for the reaction. It is essential for DNA replication and repair of damaged DNA. The sequence is that of DNA ligase from Chlamydia felis (strain Fe/C-56) (Chlamydophila felis).